Reading from the N-terminus, the 417-residue chain is Glucose-1-phosphatase (417 aa).

An N-terminal signal peptide occupies residues 1–23 (MKYKVLTLCLSAALFAPIAPTMA). Arginine 41 is a substrate binding site. Histidine 42 acts as the Nucleophile in catalysis. Substrate-binding residues include arginine 45, arginine 118, and glutamate 220. The Proton donor role is filled by aspartate 315.

This sequence belongs to the histidine acid phosphatase family. As to quaternary structure, homodimer.

It localises to the periplasm. The catalysed reaction is alpha-D-glucose 1-phosphate + H2O = D-glucose + phosphate. The polypeptide is Glucose-1-phosphatase (agp) (Providencia rettgeri).